The primary structure comprises 428 residues: Serine--tRNA ligase (428 aa).

L-serine is bound at residue 231 to 233 (TAE). 262 to 264 (RSE) serves as a coordination point for ATP. Glu285 contacts L-serine. 349-352 (EISS) serves as a coordination point for ATP. L-serine is bound at residue Ser385.

It belongs to the class-II aminoacyl-tRNA synthetase family. Type-1 seryl-tRNA synthetase subfamily. In terms of assembly, homodimer. The tRNA molecule binds across the dimer.

It is found in the cytoplasm. The enzyme catalyses tRNA(Ser) + L-serine + ATP = L-seryl-tRNA(Ser) + AMP + diphosphate + H(+). The catalysed reaction is tRNA(Sec) + L-serine + ATP = L-seryl-tRNA(Sec) + AMP + diphosphate + H(+). It functions in the pathway aminoacyl-tRNA biosynthesis; selenocysteinyl-tRNA(Sec) biosynthesis; L-seryl-tRNA(Sec) from L-serine and tRNA(Sec): step 1/1. Its function is as follows. Catalyzes the attachment of serine to tRNA(Ser). Is also able to aminoacylate tRNA(Sec) with serine, to form the misacylated tRNA L-seryl-tRNA(Sec), which will be further converted into selenocysteinyl-tRNA(Sec). The chain is Serine--tRNA ligase from Staphylococcus aureus (strain MRSA252).